The sequence spans 237 residues: Endonuclease NucS (237 aa).

This sequence belongs to the NucS endonuclease family.

The protein localises to the cytoplasm. Functionally, cleaves both 3' and 5' ssDNA extremities of branched DNA structures. The polypeptide is Endonuclease NucS (Saccharolobus islandicus (strain L.S.2.15 / Lassen #1) (Sulfolobus islandicus)).